Reading from the N-terminus, the 171-residue chain is Myelin basic protein (171 aa).

A1 carries the N-acetylalanine modification. Phosphoserine occurs at positions 7 and 12. Position 14 is a phosphotyrosine (Y14). At T17 the chain carries Phosphothreonine. S19 bears the Phosphoserine mark. Position 20 is a phosphothreonine (T20). Citrulline is present on residues R25 and R31. T35 is subject to Phosphothreonine. S40 is modified (phosphoserine). Omega-N-methylarginine is present on residues R43 and R49. A disordered region spans residues 44–115 (FFGGDRGAPK…GRGLSLSRFS (72 aa)). Position 56 is a phosphoserine (S56). Phosphotyrosine is present on Y69. A Phosphoserine modification is found at S76. A phosphothreonine mark is found at T80, T95, and T98. A Deamidated glutamine modification is found at Q103. An Omega-N-methylarginine; alternate modification is found at R107. R107 carries the post-translational modification Symmetric dimethylarginine; alternate. At S115 the chain carries Phosphoserine. Citrulline occurs at positions 122 and 130. Q148 carries the deamidated glutamine modification. R160 bears the Citrulline mark. Phosphoserine is present on S162. The residue at position 166 (S166) is a Phosphoserine; by UHMK1. R171 is modified (citrulline).

This sequence belongs to the myelin basic protein family. Homodimer. As in other animals, several charge isomers may be produced as a result of optional post-translational modifications, such as phosphorylation of serine or threonine residues, deamidation of glutamine or asparagine residues, citrullination and methylation of arginine residues. In terms of processing, phosphorylated by TAOK2, VRK2, MAPK11, MAPK12, MAPK14 and MINK1. Post-translationally, proteolytically cleaved in B cell lysosomes by cathepsin CTSG which degrades the major immunogenic MBP epitope and prevents the activation of MBP-specific autoreactive T cells.

It is found in the myelin membrane. In terms of biological role, is, with PLP, the most abundant protein component of the myelin membrane in the CNS. Has a role in both the formation and stabilization of this compact multilayer arrangement of bilayers. Each splice variant and charge isomer may have a specialized function in the assembly of an optimized, biochemically functional myelin membrane. The chain is Myelin basic protein (MBP) from Pan troglodytes (Chimpanzee).